We begin with the raw amino-acid sequence, 657 residues long: Conserved oligomeric Golgi complex subunit 6 (657 aa).

The protein belongs to the COG6 family. In terms of assembly, component of the conserved oligomeric Golgi complex which is composed of eight different subunits and is required for normal Golgi morphology and localization.

It localises to the golgi apparatus membrane. In terms of biological role, required for normal Golgi function. This is Conserved oligomeric Golgi complex subunit 6 (COG6) from Homo sapiens (Human).